Reading from the N-terminus, the 511-residue chain is Histidine ammonia-lyase (511 aa).

The segment at residues 143–145 is a cross-link (5-imidazolinone (Ala-Gly)); sequence ASG. Ser-144 carries the post-translational modification 2,3-didehydroalanine (Ser).

Belongs to the PAL/histidase family. Post-translationally, contains an active site 4-methylidene-imidazol-5-one (MIO), which is formed autocatalytically by cyclization and dehydration of residues Ala-Ser-Gly.

It is found in the cytoplasm. It catalyses the reaction L-histidine = trans-urocanate + NH4(+). It functions in the pathway amino-acid degradation; L-histidine degradation into L-glutamate; N-formimidoyl-L-glutamate from L-histidine: step 1/3. The polypeptide is Histidine ammonia-lyase (Vibrio parahaemolyticus serotype O3:K6 (strain RIMD 2210633)).